The chain runs to 243 residues: Derlin-1.2 (243 aa).

Over 1–20 (MSSPAEYYKSLPPISKAYGT) the chain is Cytoplasmic. The chain crosses the membrane as a helical span at residues 21–41 (LCFFTTVLVRLHILNPLFLYL). Residues 42-54 (YYPRVFKKFEVWR) are Lumenal-facing. A helical membrane pass occupies residues 55–75 (IFTSFFFLGPFSINFGIRLLM). Residues 76 to 94 (IARYGVMLEKGAFDKRTAD) lie on the Cytoplasmic side of the membrane. Residues 95-115 (FLWMMIFGAISLLVLSVIPQL) form a helical membrane-spanning segment. Over 116-155 (NTYVLGLPMVSMLVYVWSRENPNAQINIYGILQLKAFYLP) the chain is Lumenal. The chain crosses the membrane as a helical span at residues 156-176 (WVMLLLDVIFGSPLMPGLLGI). Residues 177–243 (MVGHLYYYFA…FRGRSYRLNQ (67 aa)) lie on the Cytoplasmic side of the membrane.

The protein belongs to the derlin family. As to expression, expressed in roots and endosperm.

The protein resides in the endoplasmic reticulum membrane. Its function is as follows. May be involved in the degradation process of specific misfolded endoplasmic reticulum (ER) luminal proteins. This is Derlin-1.2 (DER1.2) from Zea mays (Maize).